A 316-amino-acid polypeptide reads, in one-letter code: Methionyl-tRNA formyltransferase (316 aa).

112-115 (SLLP) provides a ligand contact to (6S)-5,6,7,8-tetrahydrofolate.

This sequence belongs to the Fmt family.

It carries out the reaction L-methionyl-tRNA(fMet) + (6R)-10-formyltetrahydrofolate = N-formyl-L-methionyl-tRNA(fMet) + (6S)-5,6,7,8-tetrahydrofolate + H(+). In terms of biological role, attaches a formyl group to the free amino group of methionyl-tRNA(fMet). The formyl group appears to play a dual role in the initiator identity of N-formylmethionyl-tRNA by promoting its recognition by IF2 and preventing the misappropriation of this tRNA by the elongation apparatus. The sequence is that of Methionyl-tRNA formyltransferase from Glaesserella parasuis serovar 5 (strain SH0165) (Haemophilus parasuis).